We begin with the raw amino-acid sequence, 334 residues long: Protein-methionine-sulfoxide reductase catalytic subunit MsrP (334 aa).

The segment at residues 1-44 is a signal peptide (tat-type signal); that stretch reads MKKIRKLTEADVTAESAFFMQRRQVLKALGISAAALSLPNAAHA. Mo-molybdopterin is bound by residues N88, 91–92, C146, T181, N233, R238, and 249–251; these read YE and GIK.

It belongs to the MsrP family. Heterodimer of a catalytic subunit (MsrP) and a heme-binding subunit (MsrQ). The cofactor is Mo-molybdopterin. In terms of processing, predicted to be exported by the Tat system. The position of the signal peptide cleavage has not been experimentally proven.

The protein localises to the periplasm. It catalyses the reaction L-methionyl-[protein] + a quinone + H2O = L-methionyl-(S)-S-oxide-[protein] + a quinol. The enzyme catalyses L-methionyl-[protein] + a quinone + H2O = L-methionyl-(R)-S-oxide-[protein] + a quinol. Its function is as follows. Part of the MsrPQ system that repairs oxidized periplasmic proteins containing methionine sulfoxide residues (Met-O), using respiratory chain electrons. Thus protects these proteins from oxidative-stress damage caused by reactive species of oxygen and chlorine generated by the host defense mechanisms. MsrPQ is essential for the maintenance of envelope integrity under bleach stress, rescuing a wide series of structurally unrelated periplasmic proteins from methionine oxidation, including the primary periplasmic chaperone SurA and the lipoprotein Pal. The catalytic subunit MsrP is non-stereospecific, being able to reduce both (R-) and (S-) diastereoisomers of methionine sulfoxide. This Escherichia fergusonii (strain ATCC 35469 / DSM 13698 / CCUG 18766 / IAM 14443 / JCM 21226 / LMG 7866 / NBRC 102419 / NCTC 12128 / CDC 0568-73) protein is Protein-methionine-sulfoxide reductase catalytic subunit MsrP.